Reading from the N-terminus, the 481-residue chain is Argininosuccinate lyase (481 aa).

It belongs to the lyase 1 family. Argininosuccinate lyase subfamily.

It is found in the cytoplasm. It carries out the reaction 2-(N(omega)-L-arginino)succinate = fumarate + L-arginine. Its pathway is amino-acid biosynthesis; L-arginine biosynthesis; L-arginine from L-ornithine and carbamoyl phosphate: step 3/3. The protein is Argininosuccinate lyase of Methanococcus maripaludis (strain C5 / ATCC BAA-1333).